We begin with the raw amino-acid sequence, 393 residues long: MKLAKRVASLTPSATLAITEKAKELKAAGHDVIGLGAGEPDFNTPQHILDAAIKAMNEGHTKYTPSGGLPALKEEIIKKFARDQGLDYEPAEVIVCVGAKHALYTLFQVLLDEGDEVIIPTPYWVSYPEQVKLAGGVPVYVEGLEQNHFKITPEQLKQAITPRTKAVIINSPSNPTGMIYTAEELKALGEVCLAHGVLIVSDEIYEKLTYGGAKHVSIAELSPELKAQTVIINGVSKSHSMTGWRIGYAAGPKDIIKAMTDLASHSTSNPTSIAQYAAIAAYSGPQEPVEQMRQAFEQRLNIIYDKLVQIPGFTCVKPQGAFYLFPNAREAAAMAGCRTVDEFVAALLEEAKVALVPGSGFGAPDNVRLSYATSLDALETAVERIHRFMEARA.

L-aspartate contacts are provided by Gly-38, Trp-124, and Asn-174. Lys-237 is subject to N6-(pyridoxal phosphate)lysine.

It belongs to the class-I pyridoxal-phosphate-dependent aminotransferase family. Homodimer. Requires pyridoxal 5'-phosphate as cofactor.

The protein localises to the cytoplasm. It carries out the reaction L-aspartate + 2-oxoglutarate = oxaloacetate + L-glutamate. In Geobacillus stearothermophilus (Bacillus stearothermophilus), this protein is Aspartate aminotransferase (aspC).